The following is a 238-amino-acid chain: uncharacterized protein (238 aa).

This sequence belongs to the helicase family. Yeast subtelomeric Y' repeat subfamily.

This is an uncharacterized protein from Saccharomyces cerevisiae (strain ATCC 204508 / S288c) (Baker's yeast).